The sequence spans 397 residues: Acetate kinase (397 aa).

Asn-8 is a Mg(2+) binding site. Lys-15 is an ATP binding site. Position 89 (Arg-89) interacts with substrate. Asp-146 serves as the catalytic Proton donor/acceptor. Residues 206–210 (HVGNG), 283–285 (DMR), and 331–335 (GMGEN) contribute to the ATP site. Mg(2+) is bound at residue Glu-383.

Belongs to the acetokinase family. Homodimer. Mg(2+) serves as cofactor. Requires Mn(2+) as cofactor.

Its subcellular location is the cytoplasm. It carries out the reaction acetate + ATP = acetyl phosphate + ADP. Its pathway is metabolic intermediate biosynthesis; acetyl-CoA biosynthesis; acetyl-CoA from acetate: step 1/2. Its function is as follows. Catalyzes the formation of acetyl phosphate from acetate and ATP. Can also catalyze the reverse reaction. This chain is Acetate kinase, found in Streptococcus agalactiae serotype III (strain NEM316).